The sequence spans 381 residues: Regulatory protein RapF (381 aa).

Positions 40, 43, and 45 each coordinate Mn(2+). 6 TPR repeats span residues Tyr101 to Arg137, Ser148 to Leu181, Leu182 to Glu215, Gly222 to Ser255, Pro262 to Ala295, and Glu337 to Ile370.

Belongs to the Rap family. As to quaternary structure, monomer. Is monomeric either alone or in complex with PhrF. Interacts specifically with the C-terminal DNA-binding domain of ComA. Interacts with PhrF.

Its subcellular location is the cytoplasm. Inhibited by PhrF, which prevents RapF-ComA interaction. Interaction with PhrF induces a conformational change in RapF, which is propagated to the ComA binding site and causes the dissociation of ComA from RapF. Its function is as follows. Involved in the regulation of genetic competence development. Inhibits the activity of ComA, a transcriptional factor that regulates the development of genetic competence. Acts by binding to ComA, leading to the inhibition of its DNA-binding activity. May also affect transcription independently of ComA. The chain is Regulatory protein RapF (rapF) from Bacillus subtilis (strain 168).